We begin with the raw amino-acid sequence, 196 residues long: MAQGKESVSVVEMEGSGNGPAVEMRHFETLFRLLPVGLCISALVLMLKSEQSDQYMQLDYSNVDAFRCLAYANGICAGYSLISAFDSMVPVSHHISRSWILFLLDQGITYLMLAGGAVATQVLYVAYKGDEKATWEQICGSYGRFCNRAGASVIISFFALVCFLLLSLLSAYRLFSKYDPPIHGGAKLEDQTTAQI.

At Met1–His26 the chain is on the cytoplasmic side. A helical membrane pass occupies residues Phe27–Leu47. Residues Lys48–Cys68 lie on the Extracellular side of the membrane. A helical transmembrane segment spans residues Leu69–Val89. Residues Pro90–Ser98 are Cytoplasmic-facing. The chain crosses the membrane as a helical span at residues Trp99–Ala119. The Extracellular portion of the chain corresponds to Thr120–Arg148. Residues Ala149–Leu169 form a helical membrane-spanning segment. Topologically, residues Ser170 to Ile196 are cytoplasmic.

It belongs to the Casparian strip membrane proteins (CASP) family. Homodimer and heterodimers.

Its subcellular location is the cell membrane. This chain is CASP-like protein 2A2, found in Picea sitchensis (Sitka spruce).